The primary structure comprises 311 residues: Methionyl-tRNA formyltransferase (311 aa).

112–115 (SLLP) serves as a coordination point for (6S)-5,6,7,8-tetrahydrofolate.

This sequence belongs to the Fmt family.

It catalyses the reaction L-methionyl-tRNA(fMet) + (6R)-10-formyltetrahydrofolate = N-formyl-L-methionyl-tRNA(fMet) + (6S)-5,6,7,8-tetrahydrofolate + H(+). In terms of biological role, attaches a formyl group to the free amino group of methionyl-tRNA(fMet). The formyl group appears to play a dual role in the initiator identity of N-formylmethionyl-tRNA by promoting its recognition by IF2 and preventing the misappropriation of this tRNA by the elongation apparatus. This is Methionyl-tRNA formyltransferase from Rhizobium leguminosarum bv. trifolii (strain WSM2304).